Reading from the N-terminus, the 131-residue chain is Ribonuclease VapC42 (131 aa).

A PINc domain is found at 1 to 125 (MIVDTSAIVA…FRGDDFTHTD (125 aa)). Positions 4 and 100 each coordinate Mg(2+).

This sequence belongs to the PINc/VapC protein family. It depends on Mg(2+) as a cofactor.

In terms of biological role, toxic component of a type II toxin-antitoxin (TA) system. An RNase. Its cognate antitoxin is VapB42. The polypeptide is Ribonuclease VapC42 (Mycobacterium tuberculosis (strain CDC 1551 / Oshkosh)).